The primary structure comprises 1883 residues: MAGGGGVGGGAGEHAAAAYWYDACEDGASLLCGIDFAASADFDPGLIPAMDTGADDGFVAEIDRILESINAESSPAPPPPPPPPLPEPVPVAPPELPIQEKQLQVASAPVANNAVAVVGVVQRSKGVVARKEPRRESHGCAANGGGGGEWRDGKRPRLASGGVGGPRQEWRRRPMLPPPPSRGWDDRRGRRDFDRVRKHEHHRREARGFWERDRGGKMVFRSGTWEQESDREAKRARTQDGGSMEKKAEADRMGAAQREKPVAEERARQYQLEVLEQAKSRNTIAFLETGAGKTLIAVLLIKSVCDKMLKENKKMLAVFLVPKVPLVYQVLVMTAQILLNILRHSIIKMDAIHLLILDECHHAVKKHPYSLVMSEFYHTTPKEKRPAVFGMTASPVNLKGVTSQEDCAIKIRNLESKLDSVVCTIKDRKELEKHVPMPLEVVVQYDKAATLWSLHEQIKQMESTVEEAALSSSKRTKWQFMGARDAGSRDELRLVYGVSERTESDGAANLIQKLRAINYALGELGQWCAYKVAQSFLTALQNDERANYQVDVKFQESYLKKVVDLLHCQLTEGAAMKSETSDVEMQNTEKHNTNDLEEGELPDSHGEHVDEVIGAAVADGKVTPRVQALIKILLKYQHTEDFRAIIFVERVVTALVLPKVLAELPSLSFIRCASLIGHNNNQEMRACQMQDTISKFRDGRVTLLVATSVAEEGLDIRQCNVVIRFDLAKTVLAYIQSRGRARKPGSDYILMLERGNISHETFLRNARNSEETLRKEAMERTDLSHLDGTSVLSPVDTSPGSMYQVESTGAVVSLNSAVGLIHFYCSQLPSDRYSILHPEFIMQKYEKPGGSVEYSCKLQLPCNAPFEKLEGPICSSIRLAQQAVCLAACKKLHEMGAFTDTLLPDRGSGEGEKTEQNDEGEPLPGTARHREFYPEGVADILRGEWILSGRDGYQNSQFIKLYMYSVNCVNVGTSKDPFVTQLSNFAIIFGNELDAEVLSTTMDLFVARTMITKASLVFRGRIEITESQLVLLKSFHVRLMSIVLDVDVDPSTTPWDPAKAYLFVPVGAEKCTDPLREIDWTLVNNIVNTDAWNNPLQRARPDVYLGTNERTLGGDRREYGFGKLRHGTAFGQKAHPTYGIRGAIAEFDIVKASGLVPARDRGHFSDYQNQGKLFMADSCWNAKDLAGMVVTAAHSGKRFYVDCICYNMNAENSFPRKEGYLGPLEYSSYADYYKQKYGVELIYRKQPLIRARGVSYCKNLLSPRFEHSDAREGDFSENLDKTYYVYLPPELCLVHPLPGSLVRGAQRLPSIMRRVESMLLAVQLKDIIDYPVPATKILEALTAASCQETLCYERAELLGDAYLKWVVSRFLFLKYPQKHEGQLTRMRQQMVSNMVLYQYALNKTLQSYIQADRFAPSRWAAPGVLPVFDEESREYEPSIFDEESTGCELQKESYDDYADNMQEDGEIEGDSSCYRVLSSKTLADVVEALIGVYYVAGGKIAANHLMKWIGIHAELDPEEIPPPKPYDIPESIMRSINFDTLKGVLGIEFQNKGLLVEAITHASRPSSGVSCYQRLEFVGDAVLDHLITRHLFFTYTDLPPGRLTDLRAAAVNNENFARVAVKHKLHVHLRHGSSALETQIREFVKDVQEELLKPGFNSFGLGDCKAPKVLGDIVESIAGAIFLDSGYDTSVVWKVFQPLLHPMVTPETLPMHPVRELQERCQQQAEGLEYKASRAGNIATVEVFVDGVQIGVAQNPQKKMAQKLAARNALVVLKEKETATKKEDERDGEKKNGAQMFTRQTLNDICLRRQWPMPQYRCVNEGGPAHAKRFVYSVRVNTSDRGWTDECIGEPMPSVKKAKDSAAVLLLELLNRDFPDKPDGKQP.

Disordered regions lie at residues 71 to 97 (AESS…PELP), 129 to 188 (ARKE…DDRR), and 221 to 262 (RSGT…EKPV). A compositionally biased stretch (pro residues) spans 75 to 96 (PAPPPPPPPPLPEPVPVAPPEL). 2 stretches are compositionally biased toward basic and acidic residues: residues 129–138 (ARKEPRRESH) and 228–262 (ESDR…EKPV). Residues 274–413 (VLEQAKSRNT…QEDCAIKIRN (140 aa)) enclose the Helicase ATP-binding domain. 287–294 (LETGAGKT) provides a ligand contact to ATP. The DECH box signature appears at 358–361 (DECH). Positions 577 to 604 (KSETSDVEMQNTEKHNTNDLEEGELPDS) are disordered. Residues 629 to 789 (LIKILLKYQH…RTDLSHLDGT (161 aa)) enclose the Helicase C-terminal domain. One can recognise a Dicer dsRNA-binding fold domain in the interval 817–912 (AVGLIHFYCS…LPDRGSGEGE (96 aa)). A disordered region spans residues 901-928 (TLLPDRGSGEGEKTEQNDEGEPLPGTAR). The span at 907-916 (GSGEGEKTEQ) shows a compositional bias: basic and acidic residues. Positions 1163-1296 (HFSDYQNQGK…LPPELCLVHP (134 aa)) constitute a PAZ domain. RNase III domains are found at residues 1320 to 1498 (LAVQ…VAGG) and 1538 to 1686 (FDTL…LDSG). 3 residues coordinate Mg(2+): Glu-1576, Asp-1672, and Glu-1675. 2 DRBM domains span residues 1712–1775 (HPVR…VLKE) and 1797–1872 (FTRQ…LLNR).

This sequence belongs to the helicase family. Dicer subfamily. As to quaternary structure, may interact with ARGONAUTE1 or PINHEAD through their common PAZ domains. It depends on Mg(2+) as a cofactor. Mn(2+) is required as a cofactor.

It localises to the nucleus. Its function is as follows. Involved in the RNA silencing pathway. Cleaves double-stranded RNA to produce microRNAs (miRNAs) of 21-24 nucleotides which target the selective destruction of complementary RNAs. Regulates by this way the development of the plant. May not be involved in small interfering RNAs (siRNAs) production. The protein is Endoribonuclease Dicer homolog 1 (DCL1) of Oryza sativa subsp. japonica (Rice).